The sequence spans 108 residues: Ribonuclease P protein component 4 (108 aa).

Zn(2+)-binding residues include cysteine 60, cysteine 63, cysteine 86, and cysteine 89.

This sequence belongs to the eukaryotic/archaeal RNase P protein component 4 family. In terms of assembly, consists of a catalytic RNA component and at least 4-5 protein subunits. Requires Zn(2+) as cofactor.

It localises to the cytoplasm. It catalyses the reaction Endonucleolytic cleavage of RNA, removing 5'-extranucleotides from tRNA precursor.. Part of ribonuclease P, a protein complex that generates mature tRNA molecules by cleaving their 5'-ends. This Sulfurisphaera tokodaii (strain DSM 16993 / JCM 10545 / NBRC 100140 / 7) (Sulfolobus tokodaii) protein is Ribonuclease P protein component 4.